The chain runs to 178 residues: MRVLGVDPGLTRCGLGVVDGGPGRRASLVEVGVVRTPASDEVADRLRAVSEGVDEWLDRVRPDAVAVEKVFSQANVRTVMGTAQAGAVAIVAAARRGLPIGLYTPSEVKAAVTGSGRADKAQVGFMVTKLLDLPEAPRPADAADALALALCHLWRGPALARMRAATPARSPGVPGGRR.

Active-site residues include Asp-7, Glu-68, and Asp-141. 3 residues coordinate Mg(2+): Asp-7, Glu-68, and Asp-141.

The protein belongs to the RuvC family. In terms of assembly, homodimer which binds Holliday junction (HJ) DNA. The HJ becomes 2-fold symmetrical on binding to RuvC with unstacked arms; it has a different conformation from HJ DNA in complex with RuvA. In the full resolvosome a probable DNA-RuvA(4)-RuvB(12)-RuvC(2) complex forms which resolves the HJ. It depends on Mg(2+) as a cofactor.

It is found in the cytoplasm. It catalyses the reaction Endonucleolytic cleavage at a junction such as a reciprocal single-stranded crossover between two homologous DNA duplexes (Holliday junction).. Functionally, the RuvA-RuvB-RuvC complex processes Holliday junction (HJ) DNA during genetic recombination and DNA repair. Endonuclease that resolves HJ intermediates. Cleaves cruciform DNA by making single-stranded nicks across the HJ at symmetrical positions within the homologous arms, yielding a 5'-phosphate and a 3'-hydroxyl group; requires a central core of homology in the junction. The consensus cleavage sequence is 5'-(A/T)TT(C/G)-3'. Cleavage occurs on the 3'-side of the TT dinucleotide at the point of strand exchange. HJ branch migration catalyzed by RuvA-RuvB allows RuvC to scan DNA until it finds its consensus sequence, where it cleaves and resolves the cruciform DNA. This chain is Crossover junction endodeoxyribonuclease RuvC, found in Parafrankia sp. (strain EAN1pec).